The primary structure comprises 234 residues: Sugar fermentation stimulation protein homolog (234 aa).

It belongs to the SfsA family.

The polypeptide is Sugar fermentation stimulation protein homolog (Shewanella pealeana (strain ATCC 700345 / ANG-SQ1)).